We begin with the raw amino-acid sequence, 259 residues long: Cell division protein FtsQ (259 aa).

Residues 1–15 (MTRDQTATFGRHALR) are Cytoplasmic-facing. A helical membrane pass occupies residues 16-36 (VAGSGLLVAGVVALGLLGWQW). The Periplasmic segment spans residues 37–259 (RANVTVDRVA…VVTRTRPLDG (223 aa)). The region spanning 40 to 109 (VTVDRVAVTG…GALTISVTER (70 aa)) is the POTRA domain.

The protein belongs to the FtsQ/DivIB family. FtsQ subfamily.

The protein localises to the cell inner membrane. Its function is as follows. Essential cell division protein. This is Cell division protein FtsQ from Salinibacter ruber (strain DSM 13855 / M31).